The chain runs to 218 residues: Guanylate kinase (218 aa).

Residues 14–193 (GLMLVLSSPS…AFAEVRGIVV (180 aa)) enclose the Guanylate kinase-like domain. ATP is bound at residue 21 to 28 (SPSGAGKS).

This sequence belongs to the guanylate kinase family.

The protein resides in the cytoplasm. The enzyme catalyses GMP + ATP = GDP + ADP. Its function is as follows. Essential for recycling GMP and indirectly, cGMP. The sequence is that of Guanylate kinase (gmk) from Mesorhizobium japonicum (strain LMG 29417 / CECT 9101 / MAFF 303099) (Mesorhizobium loti (strain MAFF 303099)).